The primary structure comprises 273 residues: 2,3,4,5-tetrahydropyridine-2,6-dicarboxylate N-succinyltransferase (273 aa).

Substrate-binding residues include R104 and D141.

This sequence belongs to the transferase hexapeptide repeat family. As to quaternary structure, homotrimer.

The protein resides in the cytoplasm. The catalysed reaction is (S)-2,3,4,5-tetrahydrodipicolinate + succinyl-CoA + H2O = (S)-2-succinylamino-6-oxoheptanedioate + CoA. It functions in the pathway amino-acid biosynthesis; L-lysine biosynthesis via DAP pathway; LL-2,6-diaminopimelate from (S)-tetrahydrodipicolinate (succinylase route): step 1/3. The protein is 2,3,4,5-tetrahydropyridine-2,6-dicarboxylate N-succinyltransferase of Psychrobacter sp. (strain PRwf-1).